The sequence spans 356 residues: tRNA N6-adenosine threonylcarbamoyltransferase (356 aa).

Residues His-116 and His-120 each contribute to the Fe cation site. Residues 139–143 (IVSGG), Asp-174, Gly-187, Asp-191, and Asn-281 each bind substrate. Asp-309 lines the Fe cation pocket.

The protein belongs to the KAE1 / TsaD family. Fe(2+) serves as cofactor.

It localises to the cytoplasm. The catalysed reaction is L-threonylcarbamoyladenylate + adenosine(37) in tRNA = N(6)-L-threonylcarbamoyladenosine(37) in tRNA + AMP + H(+). In terms of biological role, required for the formation of a threonylcarbamoyl group on adenosine at position 37 (t(6)A37) in tRNAs that read codons beginning with adenine. Is involved in the transfer of the threonylcarbamoyl moiety of threonylcarbamoyl-AMP (TC-AMP) to the N6 group of A37, together with TsaE and TsaB. TsaD likely plays a direct catalytic role in this reaction. The protein is tRNA N6-adenosine threonylcarbamoyltransferase of Frankia casuarinae (strain DSM 45818 / CECT 9043 / HFP020203 / CcI3).